The chain runs to 371 residues: 4-hydroxy-3-methylbut-2-en-1-yl diphosphate synthase (flavodoxin) (371 aa).

[4Fe-4S] cluster contacts are provided by Cys-270, Cys-273, Cys-305, and Glu-312.

Belongs to the IspG family. [4Fe-4S] cluster serves as cofactor.

The enzyme catalyses (2E)-4-hydroxy-3-methylbut-2-enyl diphosphate + oxidized [flavodoxin] + H2O + 2 H(+) = 2-C-methyl-D-erythritol 2,4-cyclic diphosphate + reduced [flavodoxin]. It participates in isoprenoid biosynthesis; isopentenyl diphosphate biosynthesis via DXP pathway; isopentenyl diphosphate from 1-deoxy-D-xylulose 5-phosphate: step 5/6. Converts 2C-methyl-D-erythritol 2,4-cyclodiphosphate (ME-2,4cPP) into 1-hydroxy-2-methyl-2-(E)-butenyl 4-diphosphate. The protein is 4-hydroxy-3-methylbut-2-en-1-yl diphosphate synthase (flavodoxin) of Shewanella sp. (strain ANA-3).